We begin with the raw amino-acid sequence, 196 residues long: Transcriptional regulatory protein UhpA (196 aa).

The 114-residue stretch at 3–116 folds into the Response regulatory domain; sequence TVALIDDHLI…ELIAAVHTVA (114 aa). Position 54 is a 4-aspartylphosphate (D54). Positions 131-196 constitute an HTH luxR-type domain; that stretch reads AAGRQDPLTK…ELAHRMFDGW (66 aa). The segment at residues 155-174 is a DNA-binding region (H-T-H motif); it reads VKEIAAELGLSPKTVHVHRA.

Phosphorylated and dephosphorylated by UhpB.

It localises to the cytoplasm. Its function is as follows. Part of the UhpABC signaling cascade that controls the expression of the hexose phosphate transporter UhpT. Activates the transcription of the uhpT gene. Acts by binding specifically to the uhpT promoter region. The chain is Transcriptional regulatory protein UhpA (uhpA) from Salmonella typhimurium (strain LT2 / SGSC1412 / ATCC 700720).